We begin with the raw amino-acid sequence, 474 residues long: Semenogelin-2 (474 aa).

An N-terminal signal peptide occupies residues 1 to 23; the sequence is MKSIILFVLSLLLILEKQAAVMG. Disordered regions lie at residues 24–62, 132–158, 173–194, 226–247, and 272–474; these read QKGG…SKGS, GGQA…LSSQ, KEQA…QSSY, VREE…DRLQ, and NLNQ…SSTE. Composition is skewed to polar residues over residues 31 to 40, 137 to 158, and 174 to 194; these read QLPSGSSQFP, RGTQ…LSSQ, and EQAS…QSSY. Residues 292-310 are compositionally biased toward basic and acidic residues; it reads RTEERQLNHGEKSVQKDVS. Over residues 325 to 334 the composition is skewed to polar residues; it reads KSQNQVTIHS. The segment covering 335–346 has biased composition (basic and acidic residues); that stretch reads QDQEHGHKENKM. A compositionally biased stretch (polar residues) spans 372–397; the sequence is GSISIQTEEQIHGKSQNQVRIPSQAQ. Over residues 399–426 the composition is skewed to basic and acidic residues; sequence YGHKENKISYRSSSTEERRLNSGEKDVQ. Over residues 445-455 the composition is skewed to polar residues; it reads KSQNQVTIPSQ. Over residues 456–465 the composition is skewed to basic and acidic residues; the sequence is DQEHGHKENK.

Belongs to the semenogelin family. As to quaternary structure, interacts with SERPINA5.

Its subcellular location is the secreted. Functionally, participates in the formation of a gel matrix (sperm coagulum) entrapping the accessory gland secretions and ejaculated spermatozoa. The sequence is that of Semenogelin-2 (SEMG2) from Gorilla gorilla gorilla (Western lowland gorilla).